Here is a 544-residue protein sequence, read N- to C-terminus: Protein nucleotidyltransferase YdiU (544 aa).

8 residues coordinate ATP: Gly-133, Gly-135, Arg-136, Lys-155, Asp-167, Gly-168, Arg-218, and Arg-225. Asp-294 functions as the Proton acceptor in the catalytic mechanism. The Mg(2+) site is built by Asn-295 and Asp-304. Asp-304 is an ATP binding site.

It belongs to the SELO family. Mg(2+) is required as a cofactor. Mn(2+) serves as cofactor.

It carries out the reaction L-seryl-[protein] + ATP = 3-O-(5'-adenylyl)-L-seryl-[protein] + diphosphate. It catalyses the reaction L-threonyl-[protein] + ATP = 3-O-(5'-adenylyl)-L-threonyl-[protein] + diphosphate. The enzyme catalyses L-tyrosyl-[protein] + ATP = O-(5'-adenylyl)-L-tyrosyl-[protein] + diphosphate. The catalysed reaction is L-histidyl-[protein] + UTP = N(tele)-(5'-uridylyl)-L-histidyl-[protein] + diphosphate. It carries out the reaction L-seryl-[protein] + UTP = O-(5'-uridylyl)-L-seryl-[protein] + diphosphate. It catalyses the reaction L-tyrosyl-[protein] + UTP = O-(5'-uridylyl)-L-tyrosyl-[protein] + diphosphate. Nucleotidyltransferase involved in the post-translational modification of proteins. It can catalyze the addition of adenosine monophosphate (AMP) or uridine monophosphate (UMP) to a protein, resulting in modifications known as AMPylation and UMPylation. In Cupriavidus metallidurans (strain ATCC 43123 / DSM 2839 / NBRC 102507 / CH34) (Ralstonia metallidurans), this protein is Protein nucleotidyltransferase YdiU.